The following is a 331-amino-acid chain: Glycerol-3-phosphate dehydrogenase [NAD(P)+] (331 aa).

NADPH is bound by residues W11 and K101. Residues K101, G132, and S134 each contribute to the sn-glycerol 3-phosphate site. A136 serves as a coordination point for NADPH. K188, D241, S251, R252, and N253 together coordinate sn-glycerol 3-phosphate. K188 (proton acceptor) is an active-site residue. R252 is an NADPH binding site. NADPH is bound at residue E278.

The protein belongs to the NAD-dependent glycerol-3-phosphate dehydrogenase family.

Its subcellular location is the cytoplasm. The catalysed reaction is sn-glycerol 3-phosphate + NAD(+) = dihydroxyacetone phosphate + NADH + H(+). The enzyme catalyses sn-glycerol 3-phosphate + NADP(+) = dihydroxyacetone phosphate + NADPH + H(+). It participates in membrane lipid metabolism; glycerophospholipid metabolism. Its function is as follows. Catalyzes the reduction of the glycolytic intermediate dihydroxyacetone phosphate (DHAP) to sn-glycerol 3-phosphate (G3P), the key precursor for phospholipid synthesis. This is Glycerol-3-phosphate dehydrogenase [NAD(P)+] from Phytoplasma mali (strain AT).